The chain runs to 578 residues: MAVRWTWAGKSCLLLALLTLAYILVEFSVSTLYASPGAGGARELGPRRLPDLDTREEDLSQPLYIKPPADSHALGEWGRASKLQLNEGELKQQEELIERYAINIYLSDRISLHRHIEDKRMYECKAKKFHYRSLPTTSVIIAFYNEAWSTLLRTIHSVLETSPAVLLKEIILVDDLSDRIYLKAQLETYISNLERVRLIRTNKREGLVRARLIGATFATGDVLTFLDCHCECNTGWLEPLLERISRDETAIVCPVIDTIDWNTFEFYMQTGEPMIGGFDWRLTFQWHSVPKHERDRRTSRIDPIRSPTMAGGLFAVSKKYFQYLGTYDTGMEVWGGENLELSFRVWQCGGKLEIHPCSHVGHVFPKRAPYARPNFLQNTARAAEVWMDEYKEHFYNRNPPARKEAYGDLSERKLLRERLKCKSFDWYLKNVFSNLHVPEDRPGWHGAIRSMGISSECLDYNAPDNNPTGANLSLFGCHGQGGNQFFEYTSNKEIRFNSVTELCAEVPQQKDYVGMQNCPKDGLPVPVNIIWHFKEDGTIFHPHTRLCLSAYRTAEGRPSVHMKTCDALDKNQLWRFEK.

Residues 1 to 12 are Cytoplasmic-facing; it reads MAVRWTWAGKSC. A helical; Signal-anchor for type II membrane protein transmembrane segment spans residues 13–35; the sequence is LLLALLTLAYILVEFSVSTLYAS. Residues 36-578 lie on the Lumenal side of the membrane; the sequence is PGAGGARELG…DKNQLWRFEK (543 aa). Cystine bridges form between C124–C357, C348–C421, C457–C477, C503–C518, and C547–C565. The interval 134–243 is catalytic subdomain A; it reads LPTTSVIIAF…TGWLEPLLER (110 aa). Substrate contacts are provided by D175 and R204. Positions 227 and 229 each coordinate Mn(2+). The tract at residues 303-365 is catalytic subdomain B; sequence PIRSPTMAGG…PCSHVGHVFP (63 aa). Residue W334 participates in substrate binding. Mn(2+) is bound at residue H362. Y370 contributes to the substrate binding site. Residues 444–577 enclose the Ricin B-type lectin domain; that stretch reads WHGAIRSMGI…LDKNQLWRFE (134 aa). N471 carries an N-linked (GlcNAc...) asparagine glycan.

This sequence belongs to the glycosyltransferase 2 family. GalNAc-T subfamily. Requires Mn(2+) as cofactor. In terms of tissue distribution, highly expressed in sublingual gland, stomach, colon, small intestine and cervix. Expressed at intermediate levels in kidney, ovary, lung and uterus. Weakly expressed in spleen, liver, heart and brain. Not expressed in submandibular and parotid glands, skeletal muscle and testis.

Its subcellular location is the golgi apparatus membrane. It carries out the reaction L-seryl-[protein] + UDP-N-acetyl-alpha-D-galactosamine = a 3-O-[N-acetyl-alpha-D-galactosaminyl]-L-seryl-[protein] + UDP + H(+). The enzyme catalyses L-threonyl-[protein] + UDP-N-acetyl-alpha-D-galactosamine = a 3-O-[N-acetyl-alpha-D-galactosaminyl]-L-threonyl-[protein] + UDP + H(+). It functions in the pathway protein modification; protein glycosylation. Catalyzes the initial reaction in O-linked oligosaccharide biosynthesis, the transfer of an N-acetyl-D-galactosamine residue to a serine or threonine residue on the protein receptor. Has a highest activity toward EA2 peptide substrate and a much lower activity with EPO-T, Muc2, Muc1a, Muc1b. The chain is Polypeptide N-acetylgalactosaminyltransferase 4 (Galnt4) from Mus musculus (Mouse).